The sequence spans 412 residues: Arginine biosynthesis bifunctional protein ArgJ (412 aa).

Substrate is bound by residues T162, K188, T199, E285, N407, and T412. The Nucleophile role is filled by T199.

This sequence belongs to the ArgJ family. Heterotetramer of two alpha and two beta chains.

The protein localises to the cytoplasm. The enzyme catalyses N(2)-acetyl-L-ornithine + L-glutamate = N-acetyl-L-glutamate + L-ornithine. It catalyses the reaction L-glutamate + acetyl-CoA = N-acetyl-L-glutamate + CoA + H(+). Its pathway is amino-acid biosynthesis; L-arginine biosynthesis; L-ornithine and N-acetyl-L-glutamate from L-glutamate and N(2)-acetyl-L-ornithine (cyclic): step 1/1. The protein operates within amino-acid biosynthesis; L-arginine biosynthesis; N(2)-acetyl-L-ornithine from L-glutamate: step 1/4. In terms of biological role, catalyzes two activities which are involved in the cyclic version of arginine biosynthesis: the synthesis of N-acetylglutamate from glutamate and acetyl-CoA as the acetyl donor, and of ornithine by transacetylation between N(2)-acetylornithine and glutamate. In Staphylococcus saprophyticus subsp. saprophyticus (strain ATCC 15305 / DSM 20229 / NCIMB 8711 / NCTC 7292 / S-41), this protein is Arginine biosynthesis bifunctional protein ArgJ.